The primary structure comprises 135 residues: DNA-binding protein inhibitor ID-2-B (135 aa).

The region spanning 23–75 is the bHLH domain; the sequence is ARSKAPVDEPMSLLYNMNDCYSKLKELVPSIPPNKKVSKMEILQHVIDYILDL. The short motif at 108–117 is the Nuclear export signal element; the sequence is LNTDISILSL.

In terms of assembly, heterodimer with other HLH proteins.

The protein resides in the cytoplasm. It localises to the nucleus. Transcriptional regulator (lacking a basic DNA binding domain) which negatively regulates the basic helix-loop-helix (bHLH) transcription factors by forming heterodimers and inhibiting their DNA binding and transcriptional activity. Inhibits the activity of both neurogenic (neurod1/neuroD) and myogenic (myod1/myoD) bHLH factors. May play a role in the regulation of the circadian clock. This Xenopus laevis (African clawed frog) protein is DNA-binding protein inhibitor ID-2-B (id2-b).